The primary structure comprises 365 residues: MSHNSFGHLFRVTTWGESHGPSLGCVVDGCPPGIRFTLAEVQHWMDKRKPGQSRFVTQRREDDIVKVLSGVMLDEDGETMTTTGTPISMLIENTDQRSKDYGEIARRFRPGHADFTYDLKYGIRDYRGGGRSSARETAARVAAGAIARKVVPSLNVRGALVQIGKHKINRDNWDWDQVDQNPFFCPDPEMVPVWEEYLDGIRKSGSSIGAVVEVVAEGVPAGIGAPIYAKLDQDIASSLMSINAVKGVEIGEGFASAELSGEENADQMRMGNDGKPIFLSNHAGGILGGIATGEPVIARFAIKPTSSILTERLSIDTDGNNVDVRTKGRHDPCVGIRAVPIGEAMIACTVADHYLRDRGQTGRLK.

NADP(+)-binding residues include Arg-48 and Arg-54. Residues 131–133 (RSS), 243–244 (NA), Gly-288, 303–307 (KPTSS), and Arg-329 each bind FMN.

The protein belongs to the chorismate synthase family. As to quaternary structure, homotetramer. FMNH2 is required as a cofactor.

The enzyme catalyses 5-O-(1-carboxyvinyl)-3-phosphoshikimate = chorismate + phosphate. Its pathway is metabolic intermediate biosynthesis; chorismate biosynthesis; chorismate from D-erythrose 4-phosphate and phosphoenolpyruvate: step 7/7. Functionally, catalyzes the anti-1,4-elimination of the C-3 phosphate and the C-6 proR hydrogen from 5-enolpyruvylshikimate-3-phosphate (EPSP) to yield chorismate, which is the branch point compound that serves as the starting substrate for the three terminal pathways of aromatic amino acid biosynthesis. This reaction introduces a second double bond into the aromatic ring system. This chain is Chorismate synthase, found in Agrobacterium fabrum (strain C58 / ATCC 33970) (Agrobacterium tumefaciens (strain C58)).